The primary structure comprises 654 residues: Sphingosine kinase 2 (654 aa).

Residues 1 to 17 (MNGHLEAEEQQDQRPDQ) are compositionally biased toward basic and acidic residues. The disordered stretch occupies residues 1 to 28 (MNGHLEAEEQQDQRPDQELTGSWGHGPR). Positions 1-175 (MNGHLEAEEQ…LPGDGEITPD (175 aa)) are required for binding to sulfatide and phosphoinositides and for membrane localizatione. The Nuclear localization signal motif lies at 122 to 130 (RGRRGARRR). A DAGKc domain is found at 178 to 325 (PRPPRLLLLV…LDLLSVTLAS (148 aa)). ATP contacts are provided by residues 188–190 (NPF) and 220–224 (TERQN). 245 to 248 (SGDG) contacts substrate. The active-site Proton donor/acceptor is the aspartate 247. ATP-binding positions include glutamate 252 and 277 to 279 (GSG). Aspartate 344 contributes to the substrate binding site. Residues arginine 351 and arginine 357 each coordinate ATP. Serine 387 carries the phosphoserine; by MAPK modification. Phosphoserine is present on residues serine 393 and serine 399. The tract at residues 400-509 (ELTLTPDPAP…PLPTPDARVG (110 aa)) is disordered. Residues 416–425 (LHRSVSDLPL) carry the Nuclear export signal motif. Phosphoserine; by PKD occurs at positions 419 and 421. Residues 447–461 (NGGGPELAGDWGGAG) show a composition bias toward gly residues. Residues 462-482 (DAPLSPDPLLSSPPGSPKAAL) show a composition bias toward low complexity. Serine 477 bears the Phosphoserine mark. A Phosphothreonine; by MAPK modification is found at threonine 614. 622–624 (DGE) is a binding site for ATP.

As to quaternary structure, interacts with histone H3. Interacts with HDAC1, HDAC2, MBD2 and SIN3A. Interacts with EEF1A1; the interaction enhances SPHK2 kinase activity. Interacts with PHB2. Requires Mg(2+) as cofactor. Phosphorylated by PKD on Ser-419 and Ser-421 upon PMA treatment. Phosphorylation induces export from the nucleus to the cytoplasm. Phosphorylated by MAPK1 and MAPK2 at Ser-387 and Thr-614, phosphorylation is induced by agonists such as EGF and PMA and increases kinase activity. In terms of processing, cleaved by CASP1 in apoptotic cells. The truncated form is released from cells. Mainly expressed in adult kidney, liver, and brain. Expressed in cerebral cortex and hippocampus (at protein level). Isoform 1 is the predominant form expressed in most tissues.

The protein resides in the cytoplasm. The protein localises to the nucleus. Its subcellular location is the endoplasmic reticulum. It is found in the mitochondrion inner membrane. It localises to the lysosome membrane. It catalyses the reaction a sphingoid base + ATP = a sphingoid 1-phosphate + ADP + H(+). The catalysed reaction is sphing-4-enine + ATP = sphing-4-enine 1-phosphate + ADP + H(+). The enzyme catalyses sphinganine + ATP = sphinganine 1-phosphate + ADP + H(+). It carries out the reaction (4R)-hydroxysphinganine + ATP = (4R)-hydroxysphinganine 1-phosphate + ADP + H(+). With respect to regulation, inhibited by sulfatide. Kinase activity is increased by phosphorylation by MAPK2 upon PMA or EGF treatments. Functionally, catalyzes the phosphorylation of sphingosine to form sphingosine-1-phosphate (SPP), a lipid mediator with both intra- and extracellular functions. Also acts on D-erythro-dihydrosphingosine, D-erythro-sphingosine and L-threo-dihydrosphingosine. Binds phosphoinositides. In contrast to prosurvival SPHK1, has a positive effect on intracellular ceramide levels, inhibits cells growth and enhances apoptosis. In mitochondria, is important for cytochrome-c oxidase assembly and mitochondrial respiration. The SPP produced in mitochondria binds PHB2 and modulates the regulation via PHB2 of complex IV assembly and respiration. In nucleus, plays a role in epigenetic regulation of gene expression. Interacts with HDAC1 and HDAC2 and, through SPP production, inhibits their enzymatic activity, preventing the removal of acetyl groups from lysine residues with histones. Up-regulates acetylation of histone H3-K9, histone H4-K5 and histone H2B-K12. In nucleus, may have an inhibitory effect on DNA synthesis and cell cycle. In mast cells, is the main regulator of SPP production which mediates calcium influx, NF-kappa-B activation, cytokine production, such as TNF and IL6, and degranulation of mast cells. In dopaminergic neurons, is involved in promoting mitochondrial functions regulating ATP and ROS levels. Also involved in the regulation of glucose and lipid metabolism. This chain is Sphingosine kinase 2, found in Homo sapiens (Human).